A 376-amino-acid polypeptide reads, in one-letter code: Putative glutamate--cysteine ligase 2 (376 aa).

It belongs to the glutamate--cysteine ligase type 2 family. YbdK subfamily.

It carries out the reaction L-cysteine + L-glutamate + ATP = gamma-L-glutamyl-L-cysteine + ADP + phosphate + H(+). In terms of biological role, ATP-dependent carboxylate-amine ligase which exhibits weak glutamate--cysteine ligase activity. This chain is Putative glutamate--cysteine ligase 2, found in Mycobacterium bovis (strain ATCC BAA-935 / AF2122/97).